Consider the following 189-residue polypeptide: UPF0316 protein Sca_1484 (189 aa).

Helical transmembrane passes span 8-28 (PWLM…CLTV), 40-60 (VAAA…GLVM), and 66-86 (FQNI…GMKI).

The protein belongs to the UPF0316 family.

It is found in the cell membrane. The sequence is that of UPF0316 protein Sca_1484 from Staphylococcus carnosus (strain TM300).